A 168-amino-acid chain; its full sequence is uncharacterized protein (168 aa).

The next 5 helical transmembrane spans lie at 15 to 33, 41 to 57, 73 to 93, 108 to 128, and 129 to 149; these read YLTVIIYRTGFVIAALAVL, LSLTFILIAATCCASSL, WIGLLFYINHYPALALGGALL, VPLLNLQPIFVACLWFSWVLN, and NLIALRIFSIISGVLLLVLAI.

The protein resides in the cell membrane. This is an uncharacterized protein from Haemophilus influenzae (strain ATCC 51907 / DSM 11121 / KW20 / Rd).